The primary structure comprises 198 residues: Glycerol-3-phosphate acyltransferase (198 aa).

A run of 5 helical transmembrane segments spans residues 2-22 (YAVL…AYIF), 48-70 (LGYK…AVLI), 75-97 (MGNT…PVFL), 111-131 (VVMT…VTVI), and 154-174 (IFWN…LAIF).

It belongs to the PlsY family. Probably interacts with PlsX.

It localises to the cell membrane. The catalysed reaction is an acyl phosphate + sn-glycerol 3-phosphate = a 1-acyl-sn-glycero-3-phosphate + phosphate. Its pathway is lipid metabolism; phospholipid metabolism. Functionally, catalyzes the transfer of an acyl group from acyl-phosphate (acyl-PO(4)) to glycerol-3-phosphate (G3P) to form lysophosphatidic acid (LPA). This enzyme utilizes acyl-phosphate as fatty acyl donor, but not acyl-CoA or acyl-ACP. The protein is Glycerol-3-phosphate acyltransferase of Thermoanaerobacter sp. (strain X514).